The primary structure comprises 658 residues: DNA mismatch repair protein MutL (658 aa).

Disordered regions lie at residues 114 to 137 (RQNDSSHATQVKAEDGKLSSPTAA) and 437 to 456 (RFGNMPSETPAPQTDTPLSD). Residues 442-456 (PSETPAPQTDTPLSD) show a composition bias toward polar residues.

Belongs to the DNA mismatch repair MutL/HexB family.

Its function is as follows. This protein is involved in the repair of mismatches in DNA. It is required for dam-dependent methyl-directed DNA mismatch repair. May act as a 'molecular matchmaker', a protein that promotes the formation of a stable complex between two or more DNA-binding proteins in an ATP-dependent manner without itself being part of a final effector complex. The sequence is that of DNA mismatch repair protein MutL from Neisseria meningitidis serogroup B (strain ATCC BAA-335 / MC58).